The sequence spans 852 residues: Zinc finger and SCAN domain-containing protein 29 (852 aa).

In terms of domain architecture, SCAN box spans 18 to 100 (RQRFRRFHYQ…TLVEDLEREP (83 aa)). Disordered regions lie at residues 96 to 182 (LERE…PKSG), 347 to 400 (ASHS…SAAP), and 502 to 557 (PNDG…RAPV). Lysine 112 is covalently cross-linked (Glycyl lysine isopeptide (Lys-Gly) (interchain with G-Cter in SUMO2)). Residue serine 153 is modified to Phosphoserine. Residue lysine 180 forms a Glycyl lysine isopeptide (Lys-Gly) (interchain with G-Cter in SUMO2) linkage. Over residues 508–517 (ETASCPVQGT) the composition is skewed to polar residues. Positions 528-545 (EADEATEEDSDDDEEDTE) are enriched in acidic residues. Position 561 is a phosphoserine (serine 561). A Glycyl lysine isopeptide (Lys-Gly) (interchain with G-Cter in SUMO2) cross-link involves residue lysine 576. Residues 603-625 (QGKGNESDCRSGRQWAKTSGEKR) are disordered. A Glycyl lysine isopeptide (Lys-Gly) (interchain with G-Cter in SUMO2) cross-link involves residue lysine 652. 6 consecutive C2H2-type zinc fingers follow at residues 678–700 (YKCADCGKSFSRSARLIRHRRIH), 706–728 (YKCLDCGKSFRDSSNFITHRRIH), 734–756 (YQCGECGKCFNQSSSLIIHQRTH), 762–784 (YQCEECGKSFNNSSHFSAHRRIH), 790–812 (HVCPDCGKSFSKSSDLRAHHRTH), and 818–840 (YGCHDCGKCFSKSSALNKHGEIH).

It belongs to the krueppel C2H2-type zinc-finger protein family.

It localises to the nucleus. Its function is as follows. May be involved in transcriptional regulation. This is Zinc finger and SCAN domain-containing protein 29 (ZSCAN29) from Homo sapiens (Human).